The chain runs to 1013 residues: Mediator of RNA polymerase II transcription subunit 5 (1013 aa).

Belongs to the Mediator complex subunit 5 family. As to quaternary structure, component of the Mediator complex.

Its subcellular location is the nucleus. Its function is as follows. Component of the Mediator complex, a coactivator involved in the regulated transcription of nearly all RNA polymerase II-dependent genes. Mediator functions as a bridge to convey information from gene-specific regulatory proteins to the basal RNA polymerase II transcription machinery. Mediator is recruited to promoters by direct interactions with regulatory proteins and serves as a scaffold for the assembly of a functional preinitiation complex with RNA polymerase II and the general transcription factors. The sequence is that of Mediator of RNA polymerase II transcription subunit 5 (NUT1) from Aspergillus oryzae (strain ATCC 42149 / RIB 40) (Yellow koji mold).